Reading from the N-terminus, the 575-residue chain is Flagellin B (575 aa).

Belongs to the bacterial flagellin family. In terms of assembly, heteromer of flaA and flaB.

Its subcellular location is the secreted. It localises to the bacterial flagellum. Its function is as follows. Flagellin is the subunit protein which polymerizes to form the filaments of bacterial flagella. This chain is Flagellin B (flaB), found in Campylobacter jejuni.